The sequence spans 560 residues: Putative transport protein VIBHAR_02636 (560 aa).

Helical transmembrane passes span 8–28 (LLEQ…LAFG), 37–57 (LGNS…GFSF), 66–86 (FMLF…GIFF), 91–111 (HYFI…YFCS), and 164–184 (VGYA…AKLL). 2 consecutive RCK C-terminal domains span residues 205 to 292 (LGNS…FRNG) and 293 to 376 (KEVF…KIGF). 6 helical membrane passes run 386 to 406 (LLAF…TMTF), 409 to 429 (VSFS…LGFL), 450 to 470 (LGLM…IFEH), 478 to 498 (IIGL…LVGA), 505 to 525 (SALL…MDVV), and 539 to 559 (AGTY…LIIL).

Belongs to the AAE transporter (TC 2.A.81) family. YbjL subfamily.

Its subcellular location is the cell membrane. This Vibrio campbellii (strain ATCC BAA-1116) protein is Putative transport protein VIBHAR_02636.